The sequence spans 668 residues: Echinocandin B biosynthetic cluster protein J (668 aa).

Disordered stretches follow at residues 1-20 (MHFA…DQSL), 92-113 (YTPP…PPTP), 224-322 (PLDH…QSAD), 330-349 (EVAE…SIPT), and 483-506 (NCSS…PPLK). Residues 96-106 (SLDSRSSATPP) are compositionally biased toward polar residues. Residues 264 to 275 (NPEPGTPTPPSP) show a composition bias toward pro residues. Positions 311-322 (YRSTPSPCQSAD) are enriched in polar residues. A compositionally biased stretch (low complexity) spans 484 to 494 (CSSSSCSSSAS). Over residues 495 to 505 (KKNEEKREPPL) the composition is skewed to basic and acidic residues.

Its pathway is antifungal biosynthesis. In terms of biological role, part of the gene cluster that mediates the biosynthesis of echinocandin B, a fungal lipidated cyclic hexapeptide that acts as an antifungal agent. Linoleoyl-AMP, produced by the fatty-acyl-AMP ligase ecdI, is transferred to the initiation carrier domain (T0) of ecdA. The linoleoyl-S-phosphopantetheinyl-T0 is sequentially extended with L-ornithine, L-threonine, L-proline, L-homotyrosine, L-threonine, and 4R-methyl-L-proline to form the linear hexapeptide. Thereafter, the terminal condensation (C7) performs macrocyclization of the NRPS product and the cyclic scaffold is released from ecdA. All six of the amino acid residues are hydroxylated, including 4R,5R-dihydroxy-L-ornithine, 4R-hydroxyl-L-proline, 3S,4S-dihydroxy-L-homotyrosine, and 3S-hydroxyl-4S-methyl-L-prolin. In the pathway, all the hydroxylation reactions are proposed to occur following completion of the cyclic peptide, so the unhydroxylated precursor produced by ecdA will undergo six rounds of hydroxylation. Five hydroxylase genes (ecdG, ecdH, ecdK, htyE and htyF) are embedded within the echinocandin B (ecd) and L-homotyrosine (hty) clusters. The chain is Echinocandin B biosynthetic cluster protein J from Aspergillus rugulosus (Emericella rugulosa).